A 1380-amino-acid polypeptide reads, in one-letter code: DNA-directed RNA polymerase subunit beta (1380 aa).

This sequence belongs to the RNA polymerase beta chain family. The RNAP catalytic core consists of 2 alpha, 1 beta, 1 beta' and 1 omega subunit. When a sigma factor is associated with the core the holoenzyme is formed, which can initiate transcription.

It catalyses the reaction RNA(n) + a ribonucleoside 5'-triphosphate = RNA(n+1) + diphosphate. Functionally, DNA-dependent RNA polymerase catalyzes the transcription of DNA into RNA using the four ribonucleoside triphosphates as substrates. This Ehrlichia chaffeensis (strain ATCC CRL-10679 / Arkansas) protein is DNA-directed RNA polymerase subunit beta.